The following is a 192-amino-acid chain: MGVRECPALLLLLSLLLPPLGLPALGAPPRLICDSRVLERYILEAREAENVTMGCAEGCSFGENVTVPDTKVNFYSWKRMEVEQQAVEVWQGLALLSEAILQGQALLANSSQPSETLRLHVDKAVSSLRSLTSLLRALGAQKEAISPPDAASAAPLRTFAVDTLCKLFRIYSNFLRGKLKLYTGEACRRGDR.

An N-terminal signal peptide occupies residues 1–26 (MGVRECPALLLLLSLLLPPLGLPALG). Cystine bridges form between cysteine 33–cysteine 187 and cysteine 55–cysteine 59. Asparagine 50 is a glycosylation site (N-linked (GlcNAc...) asparagine). N-linked (GlcNAc...) asparagine glycans are attached at residues asparagine 64 and asparagine 109.

The protein belongs to the EPO/TPO family.

It is found in the secreted. In terms of biological role, hormone involved in the regulation of erythrocyte proliferation and differentiation and the maintenance of a physiological level of circulating erythrocyte mass. Binds to EPOR leading to EPOR dimerization and JAK2 activation thereby activating specific downstream effectors, including STAT1 and STAT3. The sequence is that of Erythropoietin (EPO) from Equus caballus (Horse).